We begin with the raw amino-acid sequence, 616 residues long: Chaperone protein HscA (616 aa).

Belongs to the heat shock protein 70 family.

In terms of biological role, chaperone involved in the maturation of iron-sulfur cluster-containing proteins. Has a low intrinsic ATPase activity which is markedly stimulated by HscB. Involved in the maturation of IscU. The polypeptide is Chaperone protein HscA (Escherichia coli (strain SMS-3-5 / SECEC)).